The sequence spans 232 residues: Glutathione S-transferase E14 (232 aa).

One can recognise a GST N-terminal domain in the interval 4-85; sequence PKPILYYDER…HLAEKFDEGG (82 aa). Residues 91–218 form the GST C-terminal domain; sequence EHAERMKVLN…RQTMESVGSF (128 aa).

This sequence belongs to the GST superfamily. Epsilon family. As to expression, expressed in the adult ovary (at protein level).

It catalyses the reaction RX + glutathione = an S-substituted glutathione + a halide anion + H(+). In terms of biological role, conjugation of reduced glutathione to a wide number of exogenous and endogenous hydrophobic electrophiles. Essential for ecdysteroid biosynthesis. May be involved in detoxification. The polypeptide is Glutathione S-transferase E14 (Drosophila melanogaster (Fruit fly)).